A 3416-amino-acid polypeptide reads, in one-letter code: Genome polyprotein (3416 aa).

The segment at 1–34 is disordered; sequence MAKGAVLKGKGGGPPRRVPKETAKKTRQGPGRLP. Over 1–99 the chain is Cytoplasmic; it reads MAKGAVLKGK…NRRRGKRRST (99 aa). Residues 97–117 constitute a propeptide, ER anchor for the capsid protein C, removed in mature form by serine protease NS3; the sequence is RSTTGLLTSILLACLATLVIS. Residues 100–120 form a helical membrane-spanning segment; it reads TGLLTSILLACLATLVISATI. Topologically, residues 121 to 243 are extracellular; sequence RRERTGDMVI…HLTRVEGWVW (123 aa). A glycan (N-linked (GlcNAc...) asparagine; by host) is linked at N145. A helical transmembrane segment spans residues 244-261; sequence KNKLLTMAFCAVVWMVTD. Residue S262 is a topological domain, cytoplasmic. Residues 263–281 form a helical membrane-spanning segment; that stretch reads LPTRFIVITVALCLAPTYA. The Extracellular portion of the chain corresponds to 282–728; that stretch reads TRCTHLQNRD…HTAFGAAFNT (447 aa). Cystine bridges form between C284-C311, C341-C397, C341-C402, C355-C386, C373-C397, and C373-C402. A fusion peptide region spans residues 379–392; sequence DRGWGNHCGLFGKG. An N-linked (GlcNAc...) asparagine; by host glycan is attached at N435. Disulfide bonds link C467–C571 and C588–C619. Residues 729-749 traverse the membrane as a helical segment; the sequence is IFGGVGFLPRILLGVALAWLG. Topologically, residues 750-756 are cytoplasmic; sequence LNSRNPT. The helical transmembrane segment at 757 to 777 threads the bilayer; that stretch reads LSVGFLITGGLVLTMTLGVGA. The Extracellular portion of the chain corresponds to 778 to 1134; it reads DMGCAIDANR…RSMVLADNGA (357 aa). 6 disulfide bridges follow: C781/C792, C832/C922, C957/C1002, C1059/C1108, C1070/C1092, and C1091/C1095. N-linked (GlcNAc...) asparagine; by host glycosylation is found at N862, N985, and N1001. Residues 1135–1155 traverse the membrane as a helical segment; that stretch reads MLSEGGVPGIVAVFVVLELVI. The Cytoplasmic portion of the chain corresponds to 1156–1162; sequence RRRPTTG. A helical transmembrane segment spans residues 1163 to 1183; the sequence is TSVVWCGVVVLGLVVTGLVTI. The Lumenal portion of the chain corresponds to 1184–1189; it reads EGLCRY. Residues 1190-1210 traverse the membrane as a helical segment; that stretch reads VVAVGILMSMELGPEIVALVL. Residues 1211-1235 lie on the Cytoplasmic side of the membrane; the sequence is LQAVFDMRTGLLVAFAVKRAYTTRE. A helical membrane pass occupies residues 1236–1256; sequence AVVTYFLLLVLELGFPEASLS. Over 1257–1295 the chain is Lumenal; it reads NIWKWADSLAMGTLILQACSQEGRARVGYLLAAMMTQKD. The chain crosses the membrane as a helical span at residues 1296 to 1316; it reads MAIIHTGLTIFLSAATAMAVW. Over 1317 to 1361 the chain is Cytoplasmic; it reads SMIKGQRDQKGLSWATPLVGLFGGEGVGLRLLAFRRLAERRNRRS. Residues 1362–1379 traverse the membrane as a helical segment; it reads FSEPLTVVGVMLTVASGM. Residues 1380–1384 lie on the Lumenal side of the membrane; sequence VRHTS. Residues 1385–1405 traverse the membrane as a helical segment; that stretch reads QEALCALVAGAFLLLMMVLGT. Over 1406–1458 the chain is Cytoplasmic; the sequence is RKMQLIAEWCGEVEWNPDLVNEGGEVNLKVRQDAMGNLHLTEVEKEERAMALW. Residues 1412 to 1451 are interacts with and activates NS3 protease; sequence AEWCGEVEWNPDLVNEGGEVNLKVRQDAMGNLHLTEVEKE. Positions 1459–1479 form an intramembrane region, helical; sequence LLAGLVASAFHWAGILIVLAI. Topologically, residues 1480–2162 are cytoplasmic; that stretch reads WTFFEMLSSG…RMAERDAPEA (683 aa). A Peptidase S7 domain is found at 1492–1671; it reads SELVFSGQGT…EAEKSRPELP (180 aa). Residues H1545, D1569, and S1629 each act as charge relay system; for serine protease NS3 activity in the active site. The Helicase ATP-binding domain maps to 1677-1833; sequence TGWMSKGQIT…ESNGAIMSEE (157 aa). Position 1690-1697 (1690-1697) interacts with ATP; the sequence is MHPGSGKT. The DEAH box signature appears at 1781-1784; sequence DEAH. The 159-residue stretch at 1844-2002 folds into the Helicase C-terminal domain; it reads GFDWITEYEG…TLRGPVATFY (159 aa). At K1885 the chain carries N6-acetyllysine; by host. The chain crosses the membrane as a helical span at residues 2163–2183; that stretch reads FLTIVEVAVLGVATLGILWCF. The Lumenal segment spans residues 2184–2191; sequence VARTSVSR. Positions 2192 to 2211 form an intramembrane region, helical; the sequence is MFLGTVVLFAALLLLWIGGV. Position 2212 (D2212) is a topological domain, lumenal. Residues 2213 to 2233 form a helical membrane-spanning segment; sequence YGYMAGIALIFYIFLTVLQPE. Residues 2234 to 2246 are Cytoplasmic-facing; that stretch reads PGKQRSSDDNRLA. A helical transmembrane segment spans residues 2247–2267; sequence YFLLGLLSLAGLVTANEMGML. The Lumenal segment spans residues 2268–2301; that stretch reads DKTKADLAGLMWHGEQRHPAWEEWTNVDIQPARS. Positions 2302 to 2322 form an intramembrane region, helical; the sequence is WGTYVLIVSLFTPYMLHQLQT. The Lumenal portion of the chain corresponds to 2323 to 2345; it reads KIQQLVNSSVASGAQAMRDLGGG. The segment at residues 2346–2366 is an intramembrane region (helical); the sequence is TPFFGVAGHVIALGVTSLVGA. At 2367–2368 the chain is on the lumenal side; the sequence is TP. Residues 2369-2389 traverse the membrane as a helical segment; the sequence is LSLGLGVALAAFHLAIVASGL. Over 2390–2432 the chain is Cytoplasmic; the sequence is EAELTQRAHRVFFSAMVKNPMVDGDVINPFPDGEPKPVLYERR. The chain crosses the membrane as a helical span at residues 2433-2453; it reads MSLILAIALCMVSVVLNRTAA. Residues 2454–2476 lie on the Lumenal side of the membrane; the sequence is SMTEAGAVGLAALGQLVHPETET. Residues 2477–2497 traverse the membrane as a helical segment; it reads LWTMPMACGMAGLVRGSFWGL. The Cytoplasmic segment spans residues 2498 to 3416; that stretch reads LPMGHRLWLK…WDLKLESNII (919 aa). The region spanning 2514–2778 is the mRNA cap 0-1 NS5-type MT domain; the sequence is GGADGETLGD…EVDLGTGTRC (265 aa). S2569 is a binding site for S-adenosyl-L-methionine. S2569 carries the phosphoserine modification. K2574 functions as the For 2'-O-MTase activity in the catalytic mechanism. Positions 2599, 2600, 2617, 2618, 2644, and 2645 each coordinate S-adenosyl-L-methionine. The For 2'-O-MTase activity role is filled by D2659. I2660 contributes to the S-adenosyl-L-methionine binding site. Catalysis depends on for 2'-O-MTase activity residues K2696 and E2732. An interaction with host SCRIB region spans residues 2732–2736; it reads EMYFS. Residue Y2734 participates in S-adenosyl-L-methionine binding. E2952, H2956, C2961, and C2964 together coordinate Zn(2+). The region spanning 3042 to 3191 is the RdRp catalytic domain; it reads GLFYADDTAG…RPIDDRFGKA (150 aa). Zn(2+)-binding residues include H3226, C3242, and C3361.

In the N-terminal section; belongs to the class I-like SAM-binding methyltransferase superfamily. mRNA cap 0-1 NS5-type methyltransferase family. As to quaternary structure, homodimer. Interacts (via N-terminus) with host EXOC1 (via C-terminus); this interaction results in EXOC1 degradation through the proteasome degradation pathway. In terms of assembly, forms heterodimers with envelope protein E in the endoplasmic reticulum and Golgi. Homodimer; in the endoplasmic reticulum and Golgi. Interacts with protein prM. Interacts with non-structural protein 1. As to quaternary structure, homodimer; Homohexamer when secreted. Interacts with envelope protein E. In terms of assembly, interacts (via N-terminus) with serine protease NS3. Forms a heterodimer with serine protease NS3. May form homooligomers. As to quaternary structure, forms a heterodimer with NS2B. Interacts with NS4B. Interacts with unphosphorylated RNA-directed RNA polymerase NS5; this interaction stimulates RNA-directed RNA polymerase NS5 guanylyltransferase activity. In terms of assembly, interacts with serine protease NS3. Homodimer. Interacts with host STAT2; this interaction inhibits the phosphorylation of the latter, and, when all viral proteins are present (polyprotein), targets STAT2 for degradation. Interacts with serine protease NS3. Post-translationally, specific enzymatic cleavages in vivo yield mature proteins. Cleavages in the lumen of endoplasmic reticulum are performed by host signal peptidase, whereas cleavages in the cytoplasmic side are performed by serine protease NS3. Signal cleavage at the 2K-4B site requires a prior NS3 protease-mediated cleavage at the 4A-2K site. In terms of processing, cleaved in post-Golgi vesicles by a host furin, releasing the mature small envelope protein M, and peptide pr. This cleavage is incomplete as up to 30% of viral particles still carry uncleaved prM. N-glycosylated. Post-translationally, N-glycosylated. The excreted form is glycosylated and this is required for efficient secretion of the protein from infected cells. In terms of processing, acetylated by host KAT5. Acetylation modulates NS3 RNA-binding and unwinding activities and plays an important positive role for viral replication. Phosphorylated on serines residues. This phosphorylation may trigger NS5 nuclear localization.

It is found in the virion. Its subcellular location is the host nucleus. The protein localises to the host cytoplasm. The protein resides in the host perinuclear region. It localises to the secreted. It is found in the virion membrane. Its subcellular location is the host endoplasmic reticulum membrane. It catalyses the reaction Selective hydrolysis of -Xaa-Xaa-|-Yaa- bonds in which each of the Xaa can be either Arg or Lys and Yaa can be either Ser or Ala.. It carries out the reaction RNA(n) + a ribonucleoside 5'-triphosphate = RNA(n+1) + diphosphate. The enzyme catalyses a ribonucleoside 5'-triphosphate + H2O = a ribonucleoside 5'-diphosphate + phosphate + H(+). The catalysed reaction is ATP + H2O = ADP + phosphate + H(+). It catalyses the reaction a 5'-end (5'-triphosphoguanosine)-ribonucleoside in mRNA + S-adenosyl-L-methionine = a 5'-end (N(7)-methyl 5'-triphosphoguanosine)-ribonucleoside in mRNA + S-adenosyl-L-homocysteine. It carries out the reaction a 5'-end (N(7)-methyl 5'-triphosphoguanosine)-ribonucleoside in mRNA + S-adenosyl-L-methionine = a 5'-end (N(7)-methyl 5'-triphosphoguanosine)-(2'-O-methyl-ribonucleoside) in mRNA + S-adenosyl-L-homocysteine + H(+). In terms of biological role, plays a role in virus budding by binding to the cell membrane and gathering the viral RNA into a nucleocapsid that forms the core of a mature virus particle. During virus entry, may induce genome penetration into the host cytoplasm after hemifusion induced by the surface proteins. Can migrate to the cell nucleus where it modulates host functions. Inhibits RNA silencing by interfering with host Dicer. Its function is as follows. Prevents premature fusion activity of envelope proteins in trans-Golgi by binding to envelope protein E at pH6.0. After virion release in extracellular space, gets dissociated from E dimers. Functionally, acts as a chaperone for envelope protein E during intracellular virion assembly by masking and inactivating envelope protein E fusion peptide. prM is the only viral peptide matured by host furin in the trans-Golgi network probably to avoid catastrophic activation of the viral fusion activity in acidic Golgi compartment prior to virion release. prM-E cleavage is inefficient, and many virions are only partially matured. These uncleaved prM would play a role in immune evasion. In terms of biological role, may play a role in virus budding. Exerts cytotoxic effects by activating a mitochondrial apoptotic pathway through M ectodomain. May display a viroporin activity. Binds to host cell surface receptor and mediates fusion between viral and cellular membranes. Envelope protein is synthesized in the endoplasmic reticulum in the form of heterodimer with protein prM. They play a role in virion budding in the ER, and the newly formed immature particle is covered with 60 spikes composed of heterodimer between precursor prM and envelope protein E. The virion is transported to the Golgi apparatus where the low pH causes dissociation of PrM-E heterodimers and formation of E homodimers. prM-E cleavage is inefficient, and many virions are only partially matured. These uncleaved prM would play a role in immune evasion. Its function is as follows. Involved in immune evasion, pathogenesis and viral replication. Once cleaved off the polyprotein, is targeted to three destinations: the viral replication cycle, the plasma membrane and the extracellular compartment. Essential for viral replication. Required for formation of the replication complex and recruitment of other non-structural proteins to the ER-derived membrane structures. Excreted as a hexameric lipoparticle that plays a role against host immune response. Antagonizing the complement function. Binds to the host macrophages and dendritic cells. Inhibits signal transduction originating from Toll-like receptor 3 (TLR3). Functionally, component of the viral RNA replication complex that functions in virion assembly and antagonizes the host immune response. In terms of biological role, required cofactor for the serine protease function of NS3. May have membrane-destabilizing activity and form viroporins. Displays three enzymatic activities: serine protease, NTPase and RNA helicase. NS3 serine protease, in association with NS2B, performs its autocleavage and cleaves the polyprotein at dibasic sites in the cytoplasm: C-prM, NS2A-NS2B, NS2B-NS3, NS3-NS4A, NS4A-2K and NS4B-NS5. NS3 RNA helicase binds RNA and unwinds dsRNA in the 3' to 5' direction. Its function is as follows. Regulates the ATPase activity of the NS3 helicase activity. NS4A allows NS3 helicase to conserve energy during unwinding. Functionally, functions as a signal peptide for NS4B and is required for the interferon antagonism activity of the latter. In terms of biological role, induces the formation of ER-derived membrane vesicles where the viral replication takes place. Inhibits interferon (IFN)-induced host STAT1 phosphorylation and nuclear translocation, thereby preventing the establishment of cellular antiviral state by blocking the IFN-alpha/beta pathway. Inhibits STAT2 translocation in the nucleus after IFN-alpha treatment. Replicates the viral (+) and (-) RNA genome, and performs the capping of genomes in the cytoplasm. NS5 methylates viral RNA cap at guanine N-7 and ribose 2'-O positions. Besides its role in RNA genome replication, also prevents the establishment of cellular antiviral state by blocking the interferon-alpha/beta (IFN-alpha/beta) signaling pathway. Inhibits host TYK2 and STAT2 phosphorylation, thereby preventing activation of JAK-STAT signaling pathway. This chain is Genome polyprotein, found in Homo sapiens (Human).